A 132-amino-acid polypeptide reads, in one-letter code: MVMTDPIADMLTRIRNANMVRHEKLEVPASKIKKEIADLLKREGFIRDVEYIGDNKQGILRIFLKYGANNERVITGLKRISKPGLRVYAKADEVPRVLNGLGIALVSTSKGVMTDKDARQLQTGGEVVAYVW.

Belongs to the universal ribosomal protein uS8 family. Part of the 30S ribosomal subunit. Contacts proteins S5 and S12.

Functionally, one of the primary rRNA binding proteins, it binds directly to 16S rRNA central domain where it helps coordinate assembly of the platform of the 30S subunit. This chain is Small ribosomal subunit protein uS8, found in Bacillus mycoides (strain KBAB4) (Bacillus weihenstephanensis).